Consider the following 404-residue polypeptide: Phosphopentomutase (404 aa).

The Mn(2+) site is built by Asp10, Asp303, His308, Asp344, His345, and His356.

The protein belongs to the phosphopentomutase family. The cofactor is Mn(2+).

The protein localises to the cytoplasm. The catalysed reaction is 2-deoxy-alpha-D-ribose 1-phosphate = 2-deoxy-D-ribose 5-phosphate. It carries out the reaction alpha-D-ribose 1-phosphate = D-ribose 5-phosphate. Its pathway is carbohydrate degradation; 2-deoxy-D-ribose 1-phosphate degradation; D-glyceraldehyde 3-phosphate and acetaldehyde from 2-deoxy-alpha-D-ribose 1-phosphate: step 1/2. In terms of biological role, isomerase that catalyzes the conversion of deoxy-ribose 1-phosphate (dRib-1-P) and ribose 1-phosphate (Rib-1-P) to deoxy-ribose 5-phosphate (dRib-5-P) and ribose 5-phosphate (Rib-5-P), respectively. The chain is Phosphopentomutase from Shewanella oneidensis (strain ATCC 700550 / JCM 31522 / CIP 106686 / LMG 19005 / NCIMB 14063 / MR-1).